Consider the following 813-residue polypeptide: Lon protease (813 aa).

Residues 14–207 (LPLLPLRGII…ILTEILAREM (194 aa)) enclose the Lon N-terminal domain. 359 to 366 (GPPGVGKT) is a binding site for ATP. The Lon proteolytic domain maps to 595–776 (ESQVGVATGL…DQVIREALLE (182 aa)). Residues S682 and K725 contribute to the active site.

It belongs to the peptidase S16 family. As to quaternary structure, homohexamer. Organized in a ring with a central cavity.

It is found in the cytoplasm. It catalyses the reaction Hydrolysis of proteins in presence of ATP.. ATP-dependent serine protease that mediates the selective degradation of mutant and abnormal proteins as well as certain short-lived regulatory proteins. Required for cellular homeostasis and for survival from DNA damage and developmental changes induced by stress. Degrades polypeptides processively to yield small peptide fragments that are 5 to 10 amino acids long. Binds to DNA in a double-stranded, site-specific manner. In Heliobacterium modesticaldum (strain ATCC 51547 / Ice1), this protein is Lon protease.